The primary structure comprises 229 residues: Histidine biosynthesis bifunctional protein HisIE (229 aa).

Positions 1–127 are phosphoribosyl-AMP cyclohydrolase; it reads MNTLLDGIDW…APDTSALYGV (127 aa). The phosphoribosyl-ATP pyrophosphohydrolase stretch occupies residues 128–229; the sequence is VDRLYHELLA…IAEKNSRKDS (102 aa).

In the N-terminal section; belongs to the PRA-CH family. The protein in the C-terminal section; belongs to the PRA-PH family.

The protein localises to the cytoplasm. The catalysed reaction is 1-(5-phospho-beta-D-ribosyl)-ATP + H2O = 1-(5-phospho-beta-D-ribosyl)-5'-AMP + diphosphate + H(+). The enzyme catalyses 1-(5-phospho-beta-D-ribosyl)-5'-AMP + H2O = 1-(5-phospho-beta-D-ribosyl)-5-[(5-phospho-beta-D-ribosylamino)methylideneamino]imidazole-4-carboxamide. It participates in amino-acid biosynthesis; L-histidine biosynthesis; L-histidine from 5-phospho-alpha-D-ribose 1-diphosphate: step 2/9. Its pathway is amino-acid biosynthesis; L-histidine biosynthesis; L-histidine from 5-phospho-alpha-D-ribose 1-diphosphate: step 3/9. The protein is Histidine biosynthesis bifunctional protein HisIE of Wolinella succinogenes (strain ATCC 29543 / DSM 1740 / CCUG 13145 / JCM 31913 / LMG 7466 / NCTC 11488 / FDC 602W) (Vibrio succinogenes).